A 483-amino-acid chain; its full sequence is 3-isopropylmalate dehydratase large subunit (483 aa).

Positions 352, 412, and 415 each coordinate [4Fe-4S] cluster.

The protein belongs to the aconitase/IPM isomerase family. LeuC type 1 subfamily. In terms of assembly, heterodimer of LeuC and LeuD. Requires [4Fe-4S] cluster as cofactor.

It carries out the reaction (2R,3S)-3-isopropylmalate = (2S)-2-isopropylmalate. Its pathway is amino-acid biosynthesis; L-leucine biosynthesis; L-leucine from 3-methyl-2-oxobutanoate: step 2/4. Catalyzes the isomerization between 2-isopropylmalate and 3-isopropylmalate, via the formation of 2-isopropylmaleate. The polypeptide is 3-isopropylmalate dehydratase large subunit (Paenarthrobacter aurescens (strain TC1)).